Here is a 347-residue protein sequence, read N- to C-terminus: tRNA N6-adenosine threonylcarbamoyltransferase (347 aa).

Fe cation is bound by residues His-111 and His-115. Residues 134-138 (LVSGG), Asp-167, Gly-180, and Asn-277 contribute to the substrate site. Asp-305 provides a ligand contact to Fe cation.

It belongs to the KAE1 / TsaD family. Fe(2+) serves as cofactor.

The protein localises to the cytoplasm. It carries out the reaction L-threonylcarbamoyladenylate + adenosine(37) in tRNA = N(6)-L-threonylcarbamoyladenosine(37) in tRNA + AMP + H(+). Required for the formation of a threonylcarbamoyl group on adenosine at position 37 (t(6)A37) in tRNAs that read codons beginning with adenine. Is involved in the transfer of the threonylcarbamoyl moiety of threonylcarbamoyl-AMP (TC-AMP) to the N6 group of A37, together with TsaE and TsaB. TsaD likely plays a direct catalytic role in this reaction. This is tRNA N6-adenosine threonylcarbamoyltransferase from Ralstonia pickettii (strain 12J).